A 552-amino-acid chain; its full sequence is Ribosomal lysine N-methyltransferase 3 (552 aa).

The region spanning 26–335 is the SET domain; sequence SKCDIRESPL…QGQEIFNSYG (310 aa). Tyrosine 334 provides a ligand contact to S-adenosyl-L-methionine. Residues 399–432 form a disordered region; sequence EDEEDEDGQAKSDNLSDDIESEEEEEEEEGDDSL. Over residues 413 to 432 the composition is skewed to acidic residues; sequence LSDDIESEEEEEEEEGDDSL.

It belongs to the class V-like SAM-binding methyltransferase superfamily.

It localises to the nucleus. Functionally, S-adenosyl-L-methionine-dependent protein-lysine N-methyltransferase that monomethylates 60S ribosomal protein L42 (RPL42A and RPL42B) at 'Lys-40'. This is Ribosomal lysine N-methyltransferase 3 from Saccharomyces cerevisiae (strain ATCC 204508 / S288c) (Baker's yeast).